A 146-amino-acid polypeptide reads, in one-letter code: Universal stress protein MTH_1154 (146 aa).

This sequence belongs to the universal stress protein A family.

This is Universal stress protein MTH_1154 from Methanothermobacter thermautotrophicus (strain ATCC 29096 / DSM 1053 / JCM 10044 / NBRC 100330 / Delta H) (Methanobacterium thermoautotrophicum).